Here is a 355-residue protein sequence, read N- to C-terminus: Ribosomal RNA small subunit methyltransferase H (355 aa).

S-adenosyl-L-methionine is bound by residues 55–57 (GGH), D75, D122, and Q129. Positions 327 to 355 (ERTSQPLPATGAEDFVPAVPGAAEKGRRR) are disordered.

It belongs to the methyltransferase superfamily. RsmH family.

It localises to the cytoplasm. The catalysed reaction is cytidine(1402) in 16S rRNA + S-adenosyl-L-methionine = N(4)-methylcytidine(1402) in 16S rRNA + S-adenosyl-L-homocysteine + H(+). In terms of biological role, specifically methylates the N4 position of cytidine in position 1402 (C1402) of 16S rRNA. This is Ribosomal RNA small subunit methyltransferase H from Bordetella avium (strain 197N).